The primary structure comprises 567 residues: Proline--tRNA ligase (567 aa).

This sequence belongs to the class-II aminoacyl-tRNA synthetase family. ProS type 1 subfamily. As to quaternary structure, homodimer.

The protein resides in the cytoplasm. It carries out the reaction tRNA(Pro) + L-proline + ATP = L-prolyl-tRNA(Pro) + AMP + diphosphate. Catalyzes the attachment of proline to tRNA(Pro) in a two-step reaction: proline is first activated by ATP to form Pro-AMP and then transferred to the acceptor end of tRNA(Pro). As ProRS can inadvertently accommodate and process non-cognate amino acids such as alanine and cysteine, to avoid such errors it has two additional distinct editing activities against alanine. One activity is designated as 'pretransfer' editing and involves the tRNA(Pro)-independent hydrolysis of activated Ala-AMP. The other activity is designated 'posttransfer' editing and involves deacylation of mischarged Ala-tRNA(Pro). The misacylated Cys-tRNA(Pro) is not edited by ProRS. In Stenotrophomonas maltophilia (strain K279a), this protein is Proline--tRNA ligase.